The primary structure comprises 473 residues: Zinc transporter SLC39A7 (473 aa).

The chain crosses the membrane as a helical span at residues 11 to 31; it reads VAVGLLTWAALGLLVAGHGGH. Composition is skewed to basic and acidic residues over residues 44–56 and 66–114; these read GHSHRHSHEDFHH and HTHE…EHSH. Residues 44–120 form a disordered region; it reads GHSHRHSHED…EHSHGGYGES (77 aa). A Pros-methylhistidine modification is found at histidine 66. The next 3 helical transmembrane spans lie at 138-158, 169-189, and 214-234; these read ALGATVLISAAPFFVLFLIPV, LQILLSFASGGLLGDAFLHLI, and GPILSVGLWVLSGIVAFLVVE. The segment at 243–316 is disordered; that stretch reads GHEHSHGHGH…QHSGEEKAGS (74 aa). Residues serine 278 and serine 279 each carry the phosphoserine modification. A compositionally biased stretch (basic and acidic residues) spans 298 to 316; the sequence is RPKDGPVRPQHSGEEKAGS. The chain crosses the membrane as a helical span at residues 388-408; the sequence is LLTAVGALAGTAFALLTEGGA. The tract at residues 428-473 is disordered; sequence GDQAATQASPRSTSLPPVGEEDFREDPGPRQKGQQEKSGINVNCVS. Polar residues predominate over residues 431–442; it reads AATQASPRSTSL. Over residues 452-462 the composition is skewed to basic and acidic residues; the sequence is EDPGPRQKGQQ. Polar residues predominate over residues 463 to 473; it reads EKSGINVNCVS.

This sequence belongs to the ZIP transporter (TC 2.A.5) family. KE4/Catsup subfamily. As to quaternary structure, homodimer. In terms of processing, methylation at some His residue by METTL9 leads to reduced zinc-binding. Post-translationally, rapidly phosphorylated by CK2 following Zn(2+) treatment. This phosphorylation is required for efficient cytosolic Zn(2+) release.

The protein localises to the endoplasmic reticulum membrane. Its subcellular location is the golgi apparatus. The protein resides in the cis-Golgi network membrane. The enzyme catalyses Zn(2+)(in) = Zn(2+)(out). In terms of biological role, transports Zn(2+) from the endoplasmic reticulum (ER)/Golgi apparatus to the cytosol, playing an essential role in the regulation of cytosolic zinc levels. Acts as a gatekeeper of zinc release from intracellular stores, requiring post-translational activation by phosphorylation on residues, resulting in activation of multiple downstream pathways leading to cell growth and proliferation. Has an essential role in B cell development and is required for proper B cell receptor signaling. Plays an important role in maintaining intestinal epithelial homeostasis and skin dermis development by regulating ER function. Controls cell signaling pathways involved in glucose metabolism in skeletal muscle. Has a protective role against ER stress in different biological contexts. Mediates Zn(2+)-induced ferroptosis. The protein is Zinc transporter SLC39A7 (SLC39A7) of Sus scrofa (Pig).